The primary structure comprises 21 residues: Nucleoside diphosphate kinase (21 aa).

His-4 functions as the Pros-phosphohistidine intermediate in the catalytic mechanism.

Belongs to the NDK family. In terms of assembly, homohexamer. Mg(2+) is required as a cofactor.

Its subcellular location is the cytoplasm. The enzyme catalyses a 2'-deoxyribonucleoside 5'-diphosphate + ATP = a 2'-deoxyribonucleoside 5'-triphosphate + ADP. It catalyses the reaction a ribonucleoside 5'-diphosphate + ATP = a ribonucleoside 5'-triphosphate + ADP. Its function is as follows. Major role in the synthesis of nucleoside triphosphates other than ATP. The ATP gamma phosphate is transferred to the NDP beta phosphate via a ping-pong mechanism, using a phosphorylated active-site intermediate. This Candida albicans (Yeast) protein is Nucleoside diphosphate kinase (NDK1).